The sequence spans 503 residues: Aromatase (503 aa).

Transmembrane regions (helical) follow at residues 19–39 (EVVP…LLVW), 53–73 (FLGI…IGSA), and 303–323 (MLIA…FLIA). Residues Asp-309 and Met-374 each contribute to the substrate site. Cys-437 contributes to the heme binding site.

It belongs to the cytochrome P450 family. Heme is required as a cofactor.

The protein resides in the endoplasmic reticulum membrane. It is found in the microsome membrane. The catalysed reaction is testosterone + 3 reduced [NADPH--hemoprotein reductase] + 3 O2 = 17beta-estradiol + formate + 3 oxidized [NADPH--hemoprotein reductase] + 4 H2O + 4 H(+). It catalyses the reaction androst-4-ene-3,17-dione + 3 reduced [NADPH--hemoprotein reductase] + 3 O2 = estrone + formate + 3 oxidized [NADPH--hemoprotein reductase] + 4 H2O + 4 H(+). It carries out the reaction androst-4-ene-3,17-dione + reduced [NADPH--hemoprotein reductase] + O2 = 19-hydroxyandrost-4-ene-3,17-dione + oxidized [NADPH--hemoprotein reductase] + H2O + H(+). The enzyme catalyses 19-hydroxyandrost-4-ene-3,17-dione + reduced [NADPH--hemoprotein reductase] + O2 = 19-oxo-androst-4-ene-3,17-dione + oxidized [NADPH--hemoprotein reductase] + 2 H2O + H(+). The catalysed reaction is 19-oxo-androst-4-ene-3,17-dione + reduced [NADPH--hemoprotein reductase] + O2 = estrone + formate + oxidized [NADPH--hemoprotein reductase] + H2O + 2 H(+). It catalyses the reaction estrone + reduced [NADPH--hemoprotein reductase] + O2 = 2-hydroxyestrone + oxidized [NADPH--hemoprotein reductase] + H2O + H(+). It carries out the reaction 17beta-hydroxy-5alpha-androstan-3-one + reduced [NADPH--hemoprotein reductase] + O2 = 17beta,19-dihydroxy-3-oxo-5alpha-androstanone + oxidized [NADPH--hemoprotein reductase] + H2O + H(+). The enzyme catalyses 17beta,19-dihydroxy-3-oxo-5alpha-androstanone + reduced [NADPH--hemoprotein reductase] + O2 = 17beta-hydroxy-3,19-dioxo-5alpha-androstanone + oxidized [NADPH--hemoprotein reductase] + 2 H2O + H(+). The catalysed reaction is 17beta-hydroxy-3,19-dioxo-5alpha-androstanone + reduced [NADPH--hemoprotein reductase] + O2 = 17beta-hydroxy-3-oxo-19-nor-5alpha-androst-1-ene + formate + oxidized [NADPH--hemoprotein reductase] + H2O + 2 H(+). It functions in the pathway steroid hormone biosynthesis. Its function is as follows. A cytochrome P450 monooxygenase that catalyzes the conversion of C19 androgens, androst-4-ene-3,17-dione (androstenedione) and testosterone to the C18 estrogens, estrone and estradiol, respectively. Catalyzes three successive oxidations of C19 androgens: two conventional oxidations at C19 yielding 19-hydroxy and 19-oxo/19-aldehyde derivatives, followed by a third oxidative aromatization step that involves C1-beta hydrogen abstraction combined with cleavage of the C10-C19 bond to yield a phenolic A ring and formic acid. Alternatively, the third oxidative reaction yields a 19-norsteroid and formic acid. Converts dihydrotestosterone to delta1,10-dehydro 19-nordihydrotestosterone and may play a role in homeostasis of this potent androgen. Also displays 2-hydroxylase activity toward estrone. Mechanistically, uses molecular oxygen inserting one oxygen atom into a substrate, and reducing the second into a water molecule, with two electrons provided by NADPH via cytochrome P450 reductase (CPR; NADPH-ferrihemoprotein reductase). The chain is Aromatase (CYP19A1) from Capra hircus (Goat).